Reading from the N-terminus, the 914-residue chain is Caprin-2 (914 aa).

7 disordered regions span residues 259–283 (PLPK…PSGL), 298–326 (EFLN…KEDF), 367–411 (KTVD…LPKD), 439–480 (DGES…SSQR), 495–529 (CLSN…PPLY), 608–631 (HRSF…PELN), and 718–747 (GAGT…AYPL). The segment covering 264–273 (DSQEKTETIK) has biased composition (basic and acidic residues). Over residues 274 to 283 (PDSQSRPSGL) the composition is skewed to polar residues. Over residues 370–392 (DIVKRSTTDPKEKRQRKKAEQDS) the composition is skewed to basic and acidic residues. Residues 469–480 (KSPSDILPSSQR) are compositionally biased toward polar residues. The segment covering 508 to 520 (LELHSEDKPRKQA) has biased composition (basic and acidic residues). Low complexity predominate over residues 610–626 (SFTSAKTSSVTTASTQT). Residues 718 to 738 (GAGTATQRSSAGWSDSSQVSS) are compositionally biased toward polar residues. The C1q domain maps to 780–914 (LTQLRVAFSA…TFSGFLLYQD (135 aa)). Ca(2+)-binding residues include Asp865 and Glu871.

The protein belongs to the caprin family. As to quaternary structure, homotrimer; via C1q domain.

It is found in the cytoplasm. The protein localises to the cell membrane. In terms of biological role, promotes phosphorylation of the Wnt coreceptor LRP6, leading to increased activity of the canonical Wnt signaling pathway. Facilitates constitutive LRP6 phosphorylation by CDK14/CCNY during G2/M stage of the cell cycle, which may potentiate cells for Wnt signaling. May regulate the transport and translation of mRNAs, modulating for instance the expression of proteins involved in synaptic plasticity in neurons. Involved in regulation of growth as erythroblasts shift from a highly proliferative state towards their terminal phase of differentiation. May be involved in apoptosis. This chain is Caprin-2, found in Danio rerio (Zebrafish).